Here is a 181-residue protein sequence, read N- to C-terminus: Protein canopy homolog 1 (181 aa).

Positions 1 to 21 (MAILLHFGVLITAFLSSHVEG) are cleaved as a signal peptide. A Saposin B-type domain is found at 25 to 177 (PILYCGACRA…EETGLCKEYL (153 aa)). 3 cysteine pairs are disulfide-bonded: C29–C173, C32–C166, and C87–C139. Residues 178–181 (HNEL) carry the Prevents secretion from ER motif.

The protein belongs to the canopy family.

The protein resides in the endoplasmic reticulum. In terms of biological role, plays an role in early embryonic development. This Xenopus laevis (African clawed frog) protein is Protein canopy homolog 1 (cnpy1).